We begin with the raw amino-acid sequence, 270 residues long: Formamidopyrimidine-DNA glycosylase (270 aa).

Residue Pro-2 is the Schiff-base intermediate with DNA of the active site. Glu-3 (proton donor) is an active-site residue. Lys-58 (proton donor; for beta-elimination activity) is an active-site residue. Residues His-91, Arg-110, and Arg-151 each coordinate DNA. Residues 236–270 (FVYGRGGQPCKVCGTALREVKLGQRASVYCPRCQR) form an FPG-type zinc finger. Arg-260 acts as the Proton donor; for delta-elimination activity in catalysis.

The protein belongs to the FPG family. In terms of assembly, monomer. Zn(2+) is required as a cofactor.

The catalysed reaction is Hydrolysis of DNA containing ring-opened 7-methylguanine residues, releasing 2,6-diamino-4-hydroxy-5-(N-methyl)formamidopyrimidine.. It catalyses the reaction 2'-deoxyribonucleotide-(2'-deoxyribose 5'-phosphate)-2'-deoxyribonucleotide-DNA = a 3'-end 2'-deoxyribonucleotide-(2,3-dehydro-2,3-deoxyribose 5'-phosphate)-DNA + a 5'-end 5'-phospho-2'-deoxyribonucleoside-DNA + H(+). Involved in base excision repair of DNA damaged by oxidation or by mutagenic agents. Acts as a DNA glycosylase that recognizes and removes damaged bases. Has a preference for oxidized purines, such as 7,8-dihydro-8-oxoguanine (8-oxoG). Has AP (apurinic/apyrimidinic) lyase activity and introduces nicks in the DNA strand. Cleaves the DNA backbone by beta-delta elimination to generate a single-strand break at the site of the removed base with both 3'- and 5'-phosphates. The sequence is that of Formamidopyrimidine-DNA glycosylase from Pseudomonas putida (strain GB-1).